Consider the following 342-residue polypeptide: MEDLQLVLFILGAIAIVAVLVHGFWSIRRQQPKSLKDSPMGNFYKQQADKESPPKRVDADGFDADGIGAVRVRKVGESNSHETPPISPYLKQDVKAEPKPLFKHTTSTEIKQEPVPQPDFSLQSPLATEQQRGAKVSRQEPVLNGHVPPLGQSHAAMVAQKALEQEKHAQSTTVPTQTALFDEDAYLENTESEDEYVEETVDEGLDEPRDVLVLHVVAKEGQQLNGAELLPCFLTLNFKYGDMNIFHRHVDNAGNGKVLFSIANMLKPGVFDPDNMEQFSTQGVVFFMTLPCYGDALMNFSIMLNSARQLADDIDAVVLDGQRQPWGEFTKQDYLHRIRANA.

Residues 1–6 are Periplasmic-facing; that stretch reads MEDLQL. A helical membrane pass occupies residues 7–27; it reads VLFILGAIAIVAVLVHGFWSI. The Cytoplasmic portion of the chain corresponds to 28-342; that stretch reads RRQQPKSLKD…DYLHRIRANA (315 aa). A disordered region spans residues 33–57; that stretch reads KSLKDSPMGNFYKQQADKESPPKRV. The span at 47-57 shows a compositional bias: basic and acidic residues; it reads QADKESPPKRV.

The protein belongs to the ZipA family. As to quaternary structure, interacts with FtsZ via their C-terminal domains.

Its subcellular location is the cell inner membrane. In terms of biological role, essential cell division protein that stabilizes the FtsZ protofilaments by cross-linking them and that serves as a cytoplasmic membrane anchor for the Z ring. Also required for the recruitment to the septal ring of downstream cell division proteins. The chain is Cell division protein ZipA from Shewanella putrefaciens (strain CN-32 / ATCC BAA-453).